Here is a 200-residue protein sequence, read N- to C-terminus: Recombination protein RecR (200 aa).

A C4-type zinc finger spans residues 58–73; that stretch reads CQVCGNMDTENICGIC. Positions 81–176 constitute a Toprim domain; sequence SVIAIVETVA…KISRLASGIP (96 aa).

The protein belongs to the RecR family.

May play a role in DNA repair. It seems to be involved in an RecBC-independent recombinational process of DNA repair. It may act with RecF and RecO. In Rickettsia bellii (strain OSU 85-389), this protein is Recombination protein RecR.